We begin with the raw amino-acid sequence, 110 residues long: Iron-sulfur cluster assembly protein CyaY (110 aa).

This sequence belongs to the frataxin family.

In terms of biological role, involved in iron-sulfur (Fe-S) cluster assembly. May act as a regulator of Fe-S biogenesis. The polypeptide is Iron-sulfur cluster assembly protein CyaY (Pseudomonas syringae pv. tomato (strain ATCC BAA-871 / DC3000)).